The chain runs to 224 residues: PKHD-type hydroxylase SO_3913 (224 aa).

The region spanning Gln78–Ser176 is the Fe2OG dioxygenase domain. Residues His96, Asp98, and His157 each coordinate Fe cation. Residue Arg167 coordinates 2-oxoglutarate.

It depends on Fe(2+) as a cofactor. Requires L-ascorbate as cofactor.

This is PKHD-type hydroxylase SO_3913 from Shewanella oneidensis (strain ATCC 700550 / JCM 31522 / CIP 106686 / LMG 19005 / NCIMB 14063 / MR-1).